The sequence spans 266 residues: MICOS complex subunit MIC27 (266 aa).

The transit peptide at 1 to 27 (MAAIRMGKLTTMPAGLIYASVSVHAAK) directs the protein to the mitochondrion. Residues 28–110 (EEESKKQLVK…YVYMKNPPRD (83 aa)) lie on the Mitochondrial intermembrane side of the membrane. Residues 111–129 (FLPKMGVITVSGLAGLVSA) traverse the membrane as a helical segment. Topologically, residues 130–137 (RKGSKFKK) are mitochondrial matrix. A helical membrane pass occupies residues 138-155 (ITYPLGLATLGATVCYPV). Residues 156-266 (QSVIIAKVTA…NVTNSGVLRI (111 aa)) are Mitochondrial intermembrane-facing. Serine 204 carries the post-translational modification Phosphoserine.

Belongs to the apolipoprotein O/MICOS complex subunit Mic27 family. As to quaternary structure, component of the mitochondrial contact site and cristae organizing system (MICOS) complex, composed of at least MICOS10/MIC10, CHCHD3/MIC19, CHCHD6/MIC25, APOOL/MIC27, IMMT/MIC60, APOO/MIC23/MIC26 and MICOS13/MIC13. This complex was also known under the names MINOS or MitOS complex. The MICOS complex associates with mitochondrial outer membrane proteins SAMM50, MTX1 and MTX2 (together described as components of the mitochondrial outer membrane sorting assembly machinery (SAM) complex) and DNAJC11, mitochondrial inner membrane protein TMEM11 and with HSPA9. The MICOS and SAM complexes together with DNAJC11 are part of a large protein complex spanning both membranes termed the mitochondrial intermembrane space bridging (MIB) complex. Interacts with MICOS10/MIC10, IMMT/MIC60 and APOO/MIC23/MIC26.

Its subcellular location is the mitochondrion inner membrane. It localises to the mitochondrion. Component of the MICOS complex, a large protein complex of the mitochondrial inner membrane that plays crucial roles in the maintenance of crista junctions, inner membrane architecture, and formation of contact sites to the outer membrane. Specifically binds to cardiolipin (in vitro) but not to the precursor lipid phosphatidylglycerol. Plays a crucial role in crista junction formation and mitochondrial function. This Pongo abelii (Sumatran orangutan) protein is MICOS complex subunit MIC27 (APOOL).